Consider the following 229-residue polypeptide: NAD(P)H-hydrate epimerase (229 aa).

Residues 10–224 (SREVDQIAIE…DIGIPPALLD (215 aa)) form the YjeF N-terminal domain. Residue 57–61 (NNGGD) participates in (6S)-NADPHX binding. K(+)-binding residues include Asn58 and Asp129. (6S)-NADPHX is bound by residues 133 to 139 (GTGIRGQ) and Asp167. A K(+)-binding site is contributed by Ser170.

This sequence belongs to the NnrE/AIBP family. K(+) serves as cofactor.

The enzyme catalyses (6R)-NADHX = (6S)-NADHX. The catalysed reaction is (6R)-NADPHX = (6S)-NADPHX. Its function is as follows. Catalyzes the epimerization of the S- and R-forms of NAD(P)HX, a damaged form of NAD(P)H that is a result of enzymatic or heat-dependent hydration. This is a prerequisite for the S-specific NAD(P)H-hydrate dehydratase to allow the repair of both epimers of NAD(P)HX. This chain is NAD(P)H-hydrate epimerase, found in Rubinisphaera brasiliensis (strain ATCC 49424 / DSM 5305 / JCM 21570 / IAM 15109 / NBRC 103401 / IFAM 1448) (Planctomyces brasiliensis).